Here is a 367-residue protein sequence, read N- to C-terminus: DNA polymerase IV (367 aa).

A UmuC domain is found at 14–198; sequence IIHIDMDAFF…LPIAKFHGVG (185 aa). Residues Asp-18 and Asp-116 each coordinate Mg(2+). Glu-117 is an active-site residue.

It belongs to the DNA polymerase type-Y family. Monomer. Mg(2+) serves as cofactor.

The protein localises to the cytoplasm. The catalysed reaction is DNA(n) + a 2'-deoxyribonucleoside 5'-triphosphate = DNA(n+1) + diphosphate. Its function is as follows. Poorly processive, error-prone DNA polymerase involved in untargeted mutagenesis. Copies undamaged DNA at stalled replication forks, which arise in vivo from mismatched or misaligned primer ends. These misaligned primers can be extended by PolIV. Exhibits no 3'-5' exonuclease (proofreading) activity. May be involved in translesional synthesis, in conjunction with the beta clamp from PolIII. The sequence is that of DNA polymerase IV from Streptococcus thermophilus (strain ATCC BAA-491 / LMD-9).